A 188-amino-acid chain; its full sequence is Elongation factor P (188 aa).

This sequence belongs to the elongation factor P family.

It localises to the cytoplasm. It participates in protein biosynthesis; polypeptide chain elongation. Involved in peptide bond synthesis. Stimulates efficient translation and peptide-bond synthesis on native or reconstituted 70S ribosomes in vitro. Probably functions indirectly by altering the affinity of the ribosome for aminoacyl-tRNA, thus increasing their reactivity as acceptors for peptidyl transferase. The chain is Elongation factor P from Chlorobaculum tepidum (strain ATCC 49652 / DSM 12025 / NBRC 103806 / TLS) (Chlorobium tepidum).